The primary structure comprises 932 residues: UPF0182 protein Amet_0022 (932 aa).

7 consecutive transmembrane segments (helical) span residues valine 14–leucine 34, leucine 60–glycine 80, isoleucine 104–leucine 124, threonine 166–isoleucine 186, leucine 208–alanine 228, valine 256–valine 276, and leucine 286–leucine 306.

Belongs to the UPF0182 family.

The protein localises to the cell membrane. This Alkaliphilus metalliredigens (strain QYMF) protein is UPF0182 protein Amet_0022.